The sequence spans 347 residues: GDT1-like protein 2, chloroplastic (347 aa).

The transit peptide at 1–12 (MATAISVGVAVP) directs the protein to the chloroplast. Residues 70-97 (EAGSHGEHLDSSATRDSNKPTKPPSGSR) are disordered. The next 7 membrane-spanning stretches (helical) occupy residues 99 to 119 (PQSI…IVFF), 124 to 144 (SAVV…LIFV), 165 to 185 (ALVL…SVII), 196 to 216 (FQTT…FFGF), 257 to 277 (LTSP…AEWG), 299 to 319 (GAIA…AFLA), and 327 to 347 (VGLI…FGVF).

The protein belongs to the GDT1 family.

Its subcellular location is the plastid. It is found in the chloroplast membrane. In Oryza sativa subsp. japonica (Rice), this protein is GDT1-like protein 2, chloroplastic.